We begin with the raw amino-acid sequence, 972 residues long: Isoleucine--tRNA ligase (972 aa).

The 'HIGH' region signature appears at 63 to 73; it reads PYANGNIHIGH. E603 is a binding site for L-isoleucyl-5'-AMP. The 'KMSKS' region signature appears at 644 to 648; that stretch reads KMSKS. Residue K647 coordinates ATP.

It belongs to the class-I aminoacyl-tRNA synthetase family. IleS type 1 subfamily. As to quaternary structure, monomer.

Its subcellular location is the cytoplasm. It catalyses the reaction tRNA(Ile) + L-isoleucine + ATP = L-isoleucyl-tRNA(Ile) + AMP + diphosphate. Catalyzes the attachment of isoleucine to tRNA(Ile). As IleRS can inadvertently accommodate and process structurally similar amino acids such as valine, to avoid such errors it has two additional distinct tRNA(Ile)-dependent editing activities. One activity is designated as 'pretransfer' editing and involves the hydrolysis of activated Val-AMP. The other activity is designated 'posttransfer' editing and involves deacylation of mischarged Val-tRNA(Ile). The chain is Isoleucine--tRNA ligase from Brucella abortus (strain 2308).